Reading from the N-terminus, the 804-residue chain is Protein-lysine N-methyltransferase SMYD4 (804 aa).

112–114 (RSA) provides a ligand contact to S-adenosyl-L-methionine. Residues 233–574 (SSVGLCIDPL…KGQEILHCYG (342 aa)) form the SET domain. Residues Cys296, Cys299, Cys309, Cys312, Cys318, Cys322, His331, and Cys335 each coordinate Zn(2+). An MYND-type zinc finger spans residues 296 to 335 (CHRCLKHTLATVPCDGCSYAKYCSQECLQQAWELYHRTEC). S-adenosyl-L-methionine contacts are provided by residues Asn427, 539–540 (NH), Tyr573, and Phe595.

It belongs to the class V-like SAM-binding methyltransferase superfamily. As to quaternary structure, interacts (via MYND-type zinc finger) with HDAC1.

Its subcellular location is the nucleus. The protein resides in the cytoplasm. It catalyses the reaction L-lysyl-[protein] + S-adenosyl-L-methionine = N(6)-methyl-L-lysyl-[protein] + S-adenosyl-L-homocysteine + H(+). In terms of biological role, protein-lysine N-methyltransferase. Monomethylates PRMT5, modulating its transcriptional activity. May also act as a histone methyltransferase. Plays a critical role in cardiac development. Acts as a key epigenetic regulator of gene expression during cardiac development via its dual activities as a methyltransferase and negative regulator of HDAC1. The protein is Protein-lysine N-methyltransferase SMYD4 (SMYD4) of Pongo abelii (Sumatran orangutan).